Consider the following 733-residue polypeptide: Neutral ceramidase 3 (733 aa).

An N-terminal signal peptide occupies residues 1–25; sequence MTRWSMSMHCTLFLLFLLRLTCIFS. The Nucleophile role is filled by Ser307. N-linked (GlcNAc...) asparagine glycosylation occurs at Asn325.

It belongs to the neutral ceramidase family.

The protein localises to the secreted. The protein resides in the endoplasmic reticulum. It is found in the golgi apparatus. The catalysed reaction is an N-acylsphing-4-enine + H2O = sphing-4-enine + a fatty acid. Hydrolyzes the sphingolipid ceramide into sphingosine and free fatty acid. Promotes oxidative stress resistance. In Arabidopsis thaliana (Mouse-ear cress), this protein is Neutral ceramidase 3.